The primary structure comprises 136 residues: Large ribosomal subunit protein uL16c (136 aa).

The tract at residues 1-20 is disordered; it reads MLSPKRTRFRKQHRGRMKGK.

It belongs to the universal ribosomal protein uL16 family. In terms of assembly, part of the 50S ribosomal subunit.

It is found in the plastid. Its subcellular location is the chloroplast. The polypeptide is Large ribosomal subunit protein uL16c (Agrostis stolonifera (Creeping bentgrass)).